The primary structure comprises 332 residues: Glycerol-3-phosphate dehydrogenase [NAD(P)+] (332 aa).

Positions 10, 11, 31, and 105 each coordinate NADPH. Sn-glycerol 3-phosphate-binding residues include lysine 105, glycine 136, and serine 138. An NADPH-binding site is contributed by alanine 140. Residues lysine 191, aspartate 244, serine 254, arginine 255, and asparagine 256 each coordinate sn-glycerol 3-phosphate. The Proton acceptor role is filled by lysine 191. Residue arginine 255 participates in NADPH binding. Residues valine 279 and glutamate 281 each coordinate NADPH.

The protein belongs to the NAD-dependent glycerol-3-phosphate dehydrogenase family.

The protein localises to the cytoplasm. The enzyme catalyses sn-glycerol 3-phosphate + NAD(+) = dihydroxyacetone phosphate + NADH + H(+). It catalyses the reaction sn-glycerol 3-phosphate + NADP(+) = dihydroxyacetone phosphate + NADPH + H(+). Its pathway is membrane lipid metabolism; glycerophospholipid metabolism. Catalyzes the reduction of the glycolytic intermediate dihydroxyacetone phosphate (DHAP) to sn-glycerol 3-phosphate (G3P), the key precursor for phospholipid synthesis. This chain is Glycerol-3-phosphate dehydrogenase [NAD(P)+], found in Anaeromyxobacter sp. (strain K).